A 377-amino-acid polypeptide reads, in one-letter code: Nitric oxide reductase FlRd-NAD(+) reductase (377 aa).

It belongs to the FAD-dependent oxidoreductase family. Requires FAD as cofactor.

It localises to the cytoplasm. It carries out the reaction 2 reduced [nitric oxide reductase rubredoxin domain] + NAD(+) + H(+) = 2 oxidized [nitric oxide reductase rubredoxin domain] + NADH. It functions in the pathway nitrogen metabolism; nitric oxide reduction. Its function is as follows. One of at least two accessory proteins for anaerobic nitric oxide (NO) reductase. Reduces the rubredoxin moiety of NO reductase. The chain is Nitric oxide reductase FlRd-NAD(+) reductase from Salmonella schwarzengrund (strain CVM19633).